The sequence spans 296 residues: 4-hydroxybenzoate octaprenyltransferase (296 aa).

8 helical membrane-spanning segments follow: residues 28–48 (IGTL…SDGI), 51–71 (LAVL…GCVI), 102–122 (LLLT…LNHL), 143–163 (FFPI…PMAF), 174–194 (AWIL…VYAM), 212–232 (FGRY…LLMA), 233–253 (VLGA…IVLL), and 274–294 (FLAN…HTFF).

The protein belongs to the UbiA prenyltransferase family. It depends on Mg(2+) as a cofactor.

The protein localises to the cell inner membrane. The enzyme catalyses all-trans-octaprenyl diphosphate + 4-hydroxybenzoate = 4-hydroxy-3-(all-trans-octaprenyl)benzoate + diphosphate. The protein operates within cofactor biosynthesis; ubiquinone biosynthesis. In terms of biological role, catalyzes the prenylation of para-hydroxybenzoate (PHB) with an all-trans polyprenyl group. Mediates the second step in the final reaction sequence of ubiquinone-8 (UQ-8) biosynthesis, which is the condensation of the polyisoprenoid side chain with PHB, generating the first membrane-bound Q intermediate 3-octaprenyl-4-hydroxybenzoate. This chain is 4-hydroxybenzoate octaprenyltransferase, found in Neisseria meningitidis serogroup B (strain ATCC BAA-335 / MC58).